The sequence spans 498 residues: ATP synthase subunit beta, chloroplastic (498 aa).

172–179 (GGAGVGKT) is a binding site for ATP.

Belongs to the ATPase alpha/beta chains family. In terms of assembly, F-type ATPases have 2 components, CF(1) - the catalytic core - and CF(0) - the membrane proton channel. CF(1) has five subunits: alpha(3), beta(3), gamma(1), delta(1), epsilon(1). CF(0) has four main subunits: a(1), b(1), b'(1) and c(9-12).

Its subcellular location is the plastid. It is found in the chloroplast thylakoid membrane. The enzyme catalyses ATP + H2O + 4 H(+)(in) = ADP + phosphate + 5 H(+)(out). Produces ATP from ADP in the presence of a proton gradient across the membrane. The catalytic sites are hosted primarily by the beta subunits. The polypeptide is ATP synthase subunit beta, chloroplastic (Montinia caryophyllacea (Wild clove bush)).